The sequence spans 188 residues: Elongation factor P (188 aa).

N6-(3,6-diaminohexanoyl)-5-hydroxylysine is present on lysine 34.

The protein belongs to the elongation factor P family. Post-translationally, may be beta-lysylated on the epsilon-amino group of Lys-34 by the combined action of EpmA and EpmB, and then hydroxylated on the C5 position of the same residue by EpmC (if this protein is present). Lysylation is critical for the stimulatory effect of EF-P on peptide-bond formation. The lysylation moiety may extend toward the peptidyltransferase center and stabilize the terminal 3-CCA end of the tRNA. Hydroxylation of the C5 position on Lys-34 may allow additional potential stabilizing hydrogen-bond interactions with the P-tRNA.

The protein resides in the cytoplasm. It functions in the pathway protein biosynthesis; polypeptide chain elongation. Functionally, involved in peptide bond synthesis. Alleviates ribosome stalling that occurs when 3 or more consecutive Pro residues or the sequence PPG is present in a protein, possibly by augmenting the peptidyl transferase activity of the ribosome. Modification of Lys-34 is required for alleviation. The polypeptide is Elongation factor P (Histophilus somni (strain 129Pt) (Haemophilus somnus)).